The chain runs to 170 residues: Probable phospholipid hydroperoxide glutathione peroxidase (170 aa).

C44 is an active-site residue.

Belongs to the glutathione peroxidase family.

It is found in the cytoplasm. The catalysed reaction is a hydroperoxy polyunsaturated fatty acid + 2 glutathione = a hydroxy polyunsaturated fatty acid + glutathione disulfide + H2O. In terms of biological role, protects cells and enzymes from oxidative damage, by catalyzing the reduction of hydrogen peroxide, lipid peroxides and organic hydroperoxide, by glutathione. The sequence is that of Probable phospholipid hydroperoxide glutathione peroxidase (GPXMC1) from Mesembryanthemum crystallinum (Common ice plant).